A 313-amino-acid chain; its full sequence is LOB domain-containing protein 36 (313 aa).

One can recognise an LOB domain in the interval 6–107; that stretch reads SPCAACKFLR…HDLENAKKEL (102 aa). Positions 245-313 are disordered; sequence GNFVDSPSTN…SEEGRRNVIG (69 aa). The span at 249–260 shows a compositional bias: polar residues; it reads DSPSTNNNYHTD. Residues 280–302 are compositionally biased toward low complexity; it reads PSQSSQPLPLQTQETQTQTQPNS.

This sequence belongs to the LOB domain-containing protein family. Expressed in trichomes, at the base of many lateral organs, including branching points of the inflorescence and floral organs and in the distal part of the pistil at stages when style and stigma start to develop. Also detected in pedicels and at the base of petals and sepals.

In terms of biological role, controls the proximal-distal patterning in petals and the adaxial-abaxial determination of leaves. Involved in the repression of the homeobox gene BP. This is LOB domain-containing protein 36 (LBD36) from Arabidopsis thaliana (Mouse-ear cress).